The sequence spans 1099 residues: Probable inorganic carbon transporter subunit DabA (1099 aa).

Residues 175–194 (RQGRRRFATTERRTRRTRRS) are disordered. Residues 176-194 (QGRRRFATTERRTRRTRRS) show a composition bias toward basic residues. Zn(2+)-binding residues include cysteine 514, aspartate 516, histidine 722, and cysteine 737. Residues 1071–1099 (AGAGAAQPTRDAIELPEQASGPLPARDGQ) are disordered.

It belongs to the inorganic carbon transporter (TC 9.A.2) DabA family. Forms a complex with DabB. The cofactor is Zn(2+).

Its subcellular location is the cell membrane. Part of an energy-coupled inorganic carbon pump. This Parafrankia sp. (strain EAN1pec) protein is Probable inorganic carbon transporter subunit DabA.